Reading from the N-terminus, the 794-residue chain is Zinc finger and BTB domain-containing protein 17 (794 aa).

Residues 1 to 104 enclose the BTB domain; it reads MDFPQHSQRV…VASFLQMQDI (104 aa). Residues 116–285 are disordered; the sequence is EPSSTTGESA…QNLRSGTYGD (170 aa). Residues 132 to 142 show a composition bias toward basic and acidic residues; the sequence is GGDKRAKDEKA. Low complexity predominate over residues 203 to 216; the sequence is SSMAAAEAEALSES. The span at 243-252 shows a compositional bias: basic and acidic residues; that stretch reads VKEEGMHLDN. Over residues 254–263 the composition is skewed to acidic residues; sequence EPPEENEESA. The segment at 260–299 is interaction with MYC; it reads EESAGTDSGQELGMEGQNLRSGTYGDRTESKAYGSIIHKC. 13 consecutive C2H2-type zinc fingers follow at residues 297-319, 325-347, 353-375, 381-403, 409-431, 437-459, 465-487, 493-515, 519-543, 549-571, 577-599, 605-628, and 708-730; these read HKCE…IRIH, FSCR…EKTH, YGCE…KKRH, YRCG…QLVH, YQCD…LETH, HKCP…LKIH, LKCR…LRIH, YVCT…VRIH, KPCQ…VRQH, YVCE…IRHH, HKCS…IIIH, YLCD…KTVH, and YACD…VRIH. Residue Lys-388 forms a Glycyl lysine isopeptide (Lys-Gly) (interchain with G-Cter in ubiquitin) linkage. Residue Lys-472 forms a Glycyl lysine isopeptide (Lys-Gly) (interchain with G-Cter in ubiquitin) linkage. Positions 628 to 709 are interaction with MYC; it reads HQGKAGIKIL…EDPNTHILYA (82 aa). An interaction with HCFC1 region spans residues 628–794; sequence HQGKAGIKIL…TAPDCLPPAE (167 aa). The disordered stretch occupies residues 769 to 794; the sequence is PRDGTEGQPTLAESPPTAPDCLPPAE. Over residues 784-794 the composition is skewed to pro residues; the sequence is PTAPDCLPPAE.

The protein belongs to the krueppel C2H2-type zinc-finger protein family. As to quaternary structure, homooligomerizes (via the BTB/POZ domain), multimerization is required for DNA binding. Binds to the C-terminal helix-loop-helix motif of MYC which inhibits ZBTB17 transactivation and growth arrest activities and renders it insoluble in the nucleus. Also interacts with HCFC1, MAGEA4 and TMPRSS11A. Interacts (via the C-terminal zinc fingers) with GFI1; the interaction results in the recruitment of MYC to the CDKN1A/p21 and CDKN1B promoters and repression of transcription. Interacts with TRAF2, interfering with the binding of UBC13 to TRAF2, and inhibiting TRAF2 E3 ligase activity. Interacts with BCL6; the interaction inhibits ZBTB17 transactivation activity on target genes involved in cell cycle arrest. Interacts with ZBTB49; this interaction blocks ZBTB17-mediated repression of RB1. Undergoes 'Lys-48'-linked polyubiquitination at Lys-388 and Lys-472 and subsequent proteasomal degradation in a TRAF2-dependent manner and upon TNFA stimulation. Found in all the embryonic and adult tissues examined.

It is found in the nucleus. Functionally, transcription factor that can function as an activator or repressor depending on its binding partners, and by targeting negative regulators of cell cycle progression. Has been shown to bind to the promoters of adenovirus major late protein and cyclin D1 and activate transcription. Required for early embryonic development during gastrulation. Plays a critical role in early lymphocyte development, where it is essential to prevent apoptosis in lymphoid precursors, allowing them to survive in response to IL7 and undergo proper lineage commitment. Represses RB1 transcription; this repression can be blocked by interaction with ZBTB49. This is Zinc finger and BTB domain-containing protein 17 (Zbtb17) from Mus musculus (Mouse).